The chain runs to 282 residues: MAHQLKLLKDDFFASDQQAVAVADRYPQDVFAEHTHDFCELVIVWRGNGLHVLNDRPYRITRGDLFYIHADDKHSYASVNDLVLQNIIYCPERLKLNLDWQGAIPGFSASAGQPHWRLGSVGMAQARQVIGQLEHESSQHVPFANEMAELLFGQLVMLLNRHRYTSDSLPPTSSETLLDKLITRLAASLKSPFALDKFCDEASCSERVLRQQFRQQTGMTINQYLRQVRVCHAQYLLQHSRLLISDISTECGFEDSNYFSVVFTRETGMTPSQWRHLNSQKD.

The region spanning 179 to 277 (DKLITRLAAS…GMTPSQWRHL (99 aa)) is the HTH araC/xylS-type domain. DNA-binding regions (H-T-H motif) lie at residues 196-217 (DKFCDEASCSERVLRQQFRQQT) and 244-267 (ISDISTECGFEDSNYFSVVFTRET).

Binds DNA as a dimer.

It localises to the cytoplasm. In terms of biological role, activates expression of the rhaSR operon in response to L-rhamnose. The polypeptide is HTH-type transcriptional activator RhaR (Shigella flexneri serotype 5b (strain 8401)).